The primary structure comprises 212 residues: Nuclear transcription factor Y subunit C-7 (212 aa).

Residues 1-10 (MEENNGNNNH) show a composition bias toward polar residues. Disordered regions lie at residues 1 to 23 (MEEN…LPPP) and 190 to 212 (EWPA…SGGN).

This sequence belongs to the NFYC/HAP5 subunit family. As to quaternary structure, heterotrimeric transcription factor composed of three components, NF-YA, NF-YB and NF-YC. NF-YB and NF-YC must interact and dimerize for NF-YA association and DNA binding. In terms of tissue distribution, expressed in flowers.

The protein localises to the nucleus. In terms of biological role, stimulates the transcription of various genes by recognizing and binding to a CCAAT motif in promoters. The chain is Nuclear transcription factor Y subunit C-7 (NFYC7) from Arabidopsis thaliana (Mouse-ear cress).